The chain runs to 488 residues: Bifunctional protein NifU/MnmA (488 aa).

The nifU-like protein stretch occupies residues Met-1 to Leu-130. Residues Arg-143–Ala-488 are tRNA-specific 2-thiouridylase MnmA. ATP contacts are provided by residues Ala-149–Ser-156 and Phe-175. Cys-240 functions as the Nucleophile in the catalytic mechanism. Cys-240 and Cys-333 form a disulfide bridge. Residue Gly-264 coordinates ATP. The segment at Lys-283–Gln-285 is interaction with tRNA. Cys-333 functions as the Cysteine persulfide intermediate in the catalytic mechanism. The tract at residues Arg-433–Tyr-434 is interaction with tRNA.

In the N-terminal section; belongs to the NifU family. It in the C-terminal section; belongs to the MnmA/TRMU family.

It is found in the cytoplasm. It carries out the reaction S-sulfanyl-L-cysteinyl-[protein] + uridine(34) in tRNA + AH2 + ATP = 2-thiouridine(34) in tRNA + L-cysteinyl-[protein] + A + AMP + diphosphate + H(+). Its function is as follows. May be involved in the formation or repair of [Fe-S] clusters present in iron-sulfur proteins. Functionally, catalyzes the 2-thiolation of uridine at the wobble position (U34) of tRNA, leading to the formation of s(2)U34. In Rubrobacter xylanophilus (strain DSM 9941 / JCM 11954 / NBRC 16129 / PRD-1), this protein is Bifunctional protein NifU/MnmA (nifU/mnmA).